Consider the following 475-residue polypeptide: Gamma-aminobutyric acid receptor subunit gamma-2 (475 aa).

The first 39 residues, 1 to 39 (MSSPNIWSTGSSVYSTPVFSQKMTVWILLLLSLYPGFTS), serve as a signal peptide directing secretion. The Extracellular portion of the chain corresponds to 40–275 (QKSDDDYEDY…FDLSRRMGYF (236 aa)). Residues asparagine 52 and asparagine 129 are each glycosylated (N-linked (GlcNAc...) asparagine). A disulfide bridge connects residues cysteine 190 and cysteine 204. Asparagine 247 is a glycosylation site (N-linked (GlcNAc...) asparagine). Residues 276–296 (TIQTYIPCTLIVVLSWVSFWI) traverse the membrane as a helical segment. At 297–302 (NKDAVP) the chain is on the cytoplasmic side. A helical membrane pass occupies residues 303-322 (ARTSLGITTVLTMTTLSTIA). Residues 323–334 (RKSLPKVSYVTA) lie on the Extracellular side of the membrane. A helical membrane pass occupies residues 335–359 (MDLFVSVCFIFVFSALVEYGTLHYF). Residues 360–451 (VSNRKPSKDK…IHIRIAKMDS (92 aa)) lie on the Cytoplasmic side of the membrane. Residues 433 to 450 (RTGAWRHGRIHIRIAKMD) form an interaction with GABARAP region. Residues 452–472 (YARIFFPTAFCLFNLVYWVSY) form a helical membrane-spanning segment. Residues 473-475 (LYL) are Extracellular-facing.

This sequence belongs to the ligand-gated ion channel (TC 1.A.9) family. Gamma-aminobutyric acid receptor (TC 1.A.9.5) subfamily. GABRG2 sub-subfamily. As to quaternary structure, heteropentamer, formed by a combination of alpha (GABRA1-6), beta (GABRB1-3), gamma (GABRG1-3), delta (GABRD), epsilon (GABRE), rho (GABRR1-3), pi (GABRP) and theta (GABRQ) chains, each subunit exhibiting distinct physiological and pharmacological properties. Interacts with GABARAP. Interacts with KIF21B. Identified in a complex of 720 kDa composed of LHFPL4, NLGN2, GABRA1, GABRB2, GABRG2 and GABRB3. Interacts with LHFPL4. Interacts with SHISA7; interaction leads to the regulation of GABA(A) receptor trafficking, channel deactivation kinetics and pharmacology. In terms of processing, palmitoylated by ZDHHC3/GODZ; required for the accumulation of GABA(A) receptors at the postsynaptic membrane of inhibitory GABAergic synapses.

The protein resides in the postsynaptic cell membrane. It is found in the cell membrane. Its subcellular location is the cell projection. The protein localises to the dendrite. It localises to the cytoplasmic vesicle membrane. The catalysed reaction is chloride(in) = chloride(out). Allosterically activated by benzodiazepines. Activated by pentobarbital. Potentiated by etomidate, propofol, pregnanolone. Inhibited by the antagonist bicuculline. Inhibited by zinc ions. Potentiated by histamine. Gamma subunit of the heteropentameric ligand-gated chloride channel gated by gamma-aminobutyric acid (GABA), a major inhibitory neurotransmitter in the brain. GABA-gated chloride channels, also named GABA(A) receptors (GABAAR), consist of five subunits arranged around a central pore and contain GABA active binding site(s) located at the alpha and beta subunit interface(s). When activated by GABA, GABAARs selectively allow the flow of chloride anions across the cell membrane down their electrochemical gradient. Gamma-2/GABRG2-containing GABAARs are found at both synaptic and extrasynaptic sites. Chloride influx into the postsynaptic neuron following GABAAR opening decreases the neuron ability to generate a new action potential, thereby reducing nerve transmission. GABAARs containing alpha-1 and beta-2 or -3 subunits exhibit synaptogenic activity; the gamma-2 subunit being necessary but not sufficient to induce rapid synaptic contacts formation. Extrasynaptic gamma-2-containing receptors contribute to the tonic GABAergic inhibition. GABAARs function also as histamine receptor where histamine binds at the interface of two neighboring beta subunits and potentiates GABA response in a gamma-2 subunit-controlled manner. In Homo sapiens (Human), this protein is Gamma-aminobutyric acid receptor subunit gamma-2.